Here is a 427-residue protein sequence, read N- to C-terminus: Indole diterpene prenyltransferase ptmD (427 aa).

L-tryptophan is bound at residue 77-78 (YV). The substrate site is built by Arg99, Lys186, Tyr188, Arg259, Lys261, Tyr263, Tyr344, Tyr409, and Tyr413.

It belongs to the tryptophan dimethylallyltransferase family.

It participates in secondary metabolite biosynthesis. Its function is as follows. Indole diterpene prenyltransferase; part of the gene cluster that mediates the biosynthesis of the indole diterpenes penitrems. The geranylgeranyl diphosphate (GGPP) synthase ptmG catalyzes the first step in penitrem biosynthesis via conversion of farnesyl pyrophosphate and isopentyl pyrophosphate into geranylgeranyl pyrophosphate (GGPP). Condensation of indole-3-glycerol phosphate with GGPP by the prenyl transferase ptmC then forms 3-geranylgeranylindole (3-GGI). Epoxidation by the FAD-dependent monooxygenase ptmM leads to a epoxidized-GGI that is substrate of the terpene cyclase ptmB for cyclization to yield paspaline. Paspaline is subsequently converted to 13-desoxypaxilline by the cytochrome P450 monooxygenase ptmP, the latter being then converted to paxilline by the cytochrome P450 monooxygenase ptmQ. Paxilline is converted to beta-paxitriol via C-10 ketoreduction by the short-chain dehydrogenase ptmH which can be monoprenylated at the C-20 by the indole diterpene prenyltransferase ptmD. A two-step elimination (acetylation and elimination) process performed by the O-acetyltransferase ptmV and ptmI leads to the production of the prenylated form of penijanthine. The FAD-linked oxidoreductase ptmO then converts the prenylated form of penijanthine into PC-M5 which is in turn transformed into PC-M4 by the aromatic dimethylallyltransferase ptmE. Five sequential oxidative transformations performed by the cytochrome P450 monooxygenases ptmK, ptmU, ptmL, ptmN and ptmJ yield the various penitrem compounds. PtmK, ptmU and ptmM are involved in the formation of the key bicyclic ring of penitrem C via the formation of the intermediates secopenitrem D and penitrem D. PtmL catalyzes the epoxidation of penitrem D and C to yield penitrem B and F, respectively. PtmJ catalyzes the last benzylic hydroxylation to convert penitrem B to prenitrem E and penitrem F to penitrem A. The sequence is that of Indole diterpene prenyltransferase ptmD from Penicillium ochrochloron.